Consider the following 175-residue polypeptide: ATP-dependent protease subunit HslV (175 aa).

Thr-2 is an active-site residue. 3 residues coordinate Na(+): Gly-158, Cys-161, and Thr-164.

This sequence belongs to the peptidase T1B family. HslV subfamily. In terms of assembly, a double ring-shaped homohexamer of HslV is capped on each side by a ring-shaped HslU homohexamer. The assembly of the HslU/HslV complex is dependent on binding of ATP.

It is found in the cytoplasm. The catalysed reaction is ATP-dependent cleavage of peptide bonds with broad specificity.. Allosterically activated by HslU binding. Its function is as follows. Protease subunit of a proteasome-like degradation complex believed to be a general protein degrading machinery. This is ATP-dependent protease subunit HslV from Histophilus somni (strain 129Pt) (Haemophilus somnus).